The primary structure comprises 233 residues: Ribitol-5-phosphate cytidylyltransferase (233 aa).

CTP contacts are provided by residues 7 to 10 and 80 to 86; these read LAGG and GADRNET.

This sequence belongs to the IspD/TarI cytidylyltransferase family. TarI subfamily.

It carries out the reaction D-ribitol 5-phosphate + CTP + H(+) = CDP-L-ribitol + diphosphate. It functions in the pathway cell wall biogenesis; poly(ribitol phosphate) teichoic acid biosynthesis. Functionally, catalyzes the transfer of the cytidylyl group of CTP to D-ribitol 5-phosphate. The chain is Ribitol-5-phosphate cytidylyltransferase from Lactiplantibacillus plantarum (strain ATCC BAA-793 / NCIMB 8826 / WCFS1) (Lactobacillus plantarum).